We begin with the raw amino-acid sequence, 971 residues long: MADDDPYGTGQMFHLNTALTHSIFNAELYSPEIPLSTDGPYLQILEQPKQRGFRFRYVCEGPSHGGLPGASSEKNKKSYPQVKICNYVGPAKVIVQLVTNGKNIHLHAHSLVGKHCEDGVCTVTAGPKDMVVGFANLGILHVTKKKVFETLEARMTEACIRGYNPGLLVHSDLAYLQAEGGGDRQLTDREKEIIRQAAVQQTKEMDLSVVRLMFTAFLPDSTGSFTRRLEPVVSDAIYDSKAPNASNLKIVRMDRTAGCVTGGEEIYLLCDKVQKDDIQIRFYEEEENGGVWEGFGDFSPTDVHRQFAIVFKTPKYKDVNITKPASVFVQLRRKSDLETSEPKPFLYYPEIKDKEEVQRKRQKLMPNFSDSFGGGSGAGAGGGGMFGSGGGGGSTGSPGPGYGYSNYGFPPYGGITFHPGVTKSNAGVTHGTINTKFKNGPKDCAKSDDEESLTLPEKETEGEGPSLPMACTKTEPIALASTMEDKEQDMGFQDNLFLEKALQLARRHANALFDYAVTGDVKMLLAVQRHLTAVQDENGDSVLHLAIIHLHAQLVRDLLEVTSGLISDDIINMRNDLYQTPLHLAVITKQEDVVEDLLRVGADLSLLDRWGNSVLHLAAKEGHDRILSILLKSRKAAPLIDHPNGEGLNAIHIAVMSNSLPCLLLLVAAGAEVNAQEQKSGRTALHLAVEYDNISLAGCLLLEGDAHVDSTTYDGTTPLHIAAGRGSTRLAALLKAAGADPLVENFEPLYDLDDSWEKAGEDEGVVPGTTPLDMAANWQVFDILNGKPYEPVFTSDDILPQGDMKQLTEDTRLQLCKLLEIPDPDKNWATLAQKLGLGILNNAFRLSPAPSKTLMDNYEVSGGTIKELMEALQQMGYTEAIEVIQAAFRTPATTASSPVTTAQVHCLPLSSSSTRQHIDELRDSDSVCDSGVETSFRKLSFTESLTGDSPLLSLNKMPHGYGQEGPIEGKI.

Positions 40-365 (PYLQILEQPK…EVQRKRQKLM (326 aa)) constitute an RHD domain. Cys59 is modified (S-nitrosocysteine; alternate). The S-(15-deoxy-Delta12,14-prostaglandin J2-9-yl)cysteine; alternate moiety is linked to residue Cys59. Residue Lys323 forms a Glycyl lysine isopeptide (Lys-Gly) (interchain with G-Cter in SUMO2) linkage. The residue at position 335 (Ser335) is a Phosphoserine; by PKA. A Nuclear localization signal motif is present at residues 358–363 (QRKRQK). The interval 370–392 (DSFGGGSGAGAGGGGMFGSGGGG) is GRR. The segment at 433-971 (INTKFKNGPK…GQEGPIEGKI (539 aa)) is interaction with CFLAR. Lys438 is subject to N6-acetyllysine; by EP300. The disordered stretch occupies residues 439–470 (NGPKDCAKSDDEESLTLPEKETEGEGPSLPMA). The residue at position 447 (Ser447) is a Phosphoserine. ANK repeat units lie at residues 538–567 (NGDSVLHLAIIHLHAQLVRDLLEVTSGLIS), 577–606 (LYQTPLHLAVITKQEDVVEDLLRVGADLSL), 610–639 (WGNSVLHLAAKEGHDRILSILLKSRKAAPL), 646–675 (EGLNAIHIAVMSNSLPCLLLLVAAGAEVNA), 680–710 (SGRTALHLAVEYDNISLAGCLLLEGDAHVDS), and 714–743 (DGTTPLHIAAGRGSTRLAALLKAAGADPLV). An essential for interaction with HIF1AN region spans residues 646–680 (EGLNAIHIAVMSNSLPCLLLLVAAGAEVNAQEQKS). (3S)-3-hydroxyasparagine; by HIF1AN is present on Asn674. Position 755 is a phosphoserine (Ser755). One copy of the ANK 7 repeat lies at 767–797 (PGTTPLDMAANWQVFDILNGKPYEPVFTSDD). The 88-residue stretch at 801–888 (QGDMKQLTED…EAIEVIQAAF (88 aa)) folds into the Death domain. Position 896 is a phosphoserine (Ser896). Ser910 bears the Phosphoserine; by GSK3-beta; in vitro mark. Phosphoserine is present on Ser926. Phosphoserine; by IKKB occurs at positions 930 and 935. Residue Ser940 is modified to Phosphoserine. Thr946 carries the phosphothreonine modification.

Component of the NF-kappa-B p65-p50 complex. Homodimer; component of the NF-kappa-B p50-p50 complex. Component of the NF-kappa-B p105-p50 complex. Component of the NF-kappa-B p50-c-Rel complex. Component of a complex consisting of the NF-kappa-B p50-p50 homodimer and BCL3. Also interacts with MAP3K8. NF-kappa-B p50 subunit interacts with NCOA3 coactivator, which may coactivate NF-kappa-B dependent expression via its histone acetyltransferase activity. Interacts with TSC22D3; this interaction prevents nuclear translocation and DNA-binding. Interacts with SPAG9 and UNC5CL. NFKB1/p105 interacts with CFLAR; the interaction inhibits p105 processing into p50. NFKB1/p105 forms a ternary complex with MAP3K8 and TNIP2. Interacts with GSK3B; the interaction prevents processing of p105 to p50. NFKB1/p50 interacts with NFKBIE. NFKB1/p50 interacts with NFKBIZ. Nuclear factor NF-kappa-B p50 subunit interacts with NFKBID. Directly interacts with MEN1. Interacts with HIF1AN. Interacts with FEM1AA; interaction is direct. In terms of processing, generation of the NF-kappa-B p50 (Nuclear factor NF-kappa-B p50 subunit) transcription factor takes place both cotranslationally and post-translationally via non-mutually exclusive mechanisms. A cotranslational processing allows the production of both p50 and p105 (Nuclear factor NF-kappa-B p105 subunit) from a single NFKB1 mRNA. While translation occurs, the particular unfolded structure after the GRR repeat region acts as a substrate for the proteasome, promoting degradation of the C-terminus. The GRR acts as a proteasomal 'stop signal', protecting the region upstream of the GRR from degradation and promoting generation of p50. It is unclear if limited proteasome degradation during cotranslational processing depends on ubiquitination. NF-kappa-B p50 is also generated post-translationally following ubiquitination by the KPC complex, leading to limited processing by the proteasome downstream of the GRR region, thereby generating p50. Phosphorylation at the C-terminus by IKBKB/IKKB acts as a signal for ubiquitination and promotes either complete degradation or processing to generate the NF-kappa-B p50 (Nuclear factor NF-kappa-B p50 subunit). Phosphorylation at Ser-910 primes p105 for proteolytic processing in response to TNF-alpha stimulation. Phosphorylation at Ser-926, Ser-930 and Ser-935 are required for BTRC/BTRCP-mediated ubiquitination and proteolysis. Phosphorylation at Ser-930 is also required for ubiquitination by the KPC complex and limited processing to generate NF-kappa-B p50 (Nuclear factor NF-kappa-B p50 subunit). Post-translationally, polyubiquitinated at multiple Lys residues in the C-terminus. Polyubiquitinated by the SCF(FBXW11) and SCF(BTRC) complexes following phosphorylation at Ser-926, Ser-930 and Ser-935, leading to its complete degradation. In contrast, polyubiquitination by the KPC complex following phosphorylation at Ser-930 leads to limited proteosomal processing and generation of the active NF-kappa-B p50 (Nuclear factor NF-kappa-B p50 subunit). In terms of processing, S-nitrosylation of Cys-59 affects DNA binding. The covalent modification of cysteine by 15-deoxy-Delta12,14-prostaglandin-J2 is autocatalytic and reversible. It may occur as an alternative to other cysteine modifications, such as S-nitrosylation and S-palmitoylation.

The protein resides in the cytoplasm. Its subcellular location is the nucleus. NF-kappa-B is a pleiotropic transcription factor present in almost all cell types and is the endpoint of a series of signal transduction events that are initiated by a vast array of stimuli related to many biological processes such as inflammation, immunity, differentiation, cell growth, tumorigenesis and apoptosis. NF-kappa-B is a homo- or heterodimeric complex formed by the Rel-like domain-containing proteins RELA/p65, RELB, NFKB1/p105, NFKB1/p50, REL and NFKB2/p52 and the heterodimeric p65-p50 complex appears to be most abundant one. The dimers bind at kappa-B sites in the DNA of their target genes and the individual dimers have distinct preferences for different kappa-B sites that they can bind with distinguishable affinity and specificity. Different dimer combinations act as transcriptional activators or repressors, respectively. NF-kappa-B is controlled by various mechanisms of post-translational modification and subcellular compartmentalization as well as by interactions with other cofactors or corepressors. NF-kappa-B complexes are held in the cytoplasm in an inactive state complexed with members of the NF-kappa-B inhibitor (I-kappa-B) family. In a conventional activation pathway, I-kappa-B is phosphorylated by I-kappa-B kinases (IKKs) in response to different activators, subsequently degraded thus liberating the active NF-kappa-B complex which translocates to the nucleus. NF-kappa-B heterodimeric p65-p50 and RelB-p50 complexes are transcriptional activators. The NF-kappa-B p50-p50 homodimer is a transcriptional repressor, but can act as a transcriptional activator when associated with BCL3. NFKB1 appears to have dual functions such as cytoplasmic retention of attached NF-kappa-B proteins by p105 and generation of p50 by a cotranslational processing. The proteasome-mediated process ensures the production of both p50 and p105 and preserves their independent function, although processing of NFKB1/p105 also appears to occur post-translationally. p50 binds to the kappa-B consensus sequence 5'-GGRNNYYCC-3', located in the enhancer region of genes involved in immune response and acute phase reactions. Plays a role in the regulation of apoptosis. In a complex with MAP3K8, NFKB1/p105 represses MAP3K8-induced MAPK signaling; active MAP3K8 is released by proteasome-dependent degradation of NFKB1/p105. Its function is as follows. P105 is the precursor of the active p50 subunit (Nuclear factor NF-kappa-B p50 subunit) of the nuclear factor NF-kappa-B. Acts as a cytoplasmic retention of attached NF-kappa-B proteins by p105. In terms of biological role, constitutes the active form, which associates with RELA/p65 to form the NF-kappa-B p65-p50 complex to form a transcription factor. Together with RELA/p65, binds to the kappa-B consensus sequence 5'-GGRNNYYCC-3', located in the enhancer region of genes involved in immune response and acute phase reactions. Functionally, isoform 3 (p98) (but not p84 or p105) acts as a transactivator of NF-kappa-B-regulated gene expression. Acts as an inhibitor of transactivation of p50 NF-kappa-B subunit, probably by sequestering it in the cytoplasm. The polypeptide is Nuclear factor NF-kappa-B p105 subunit (Nfkb1) (Mus musculus (Mouse)).